The primary structure comprises 95 residues: Cliotide T1 (95 aa).

A cross-link (cyclopeptide (Gly-Asn)) is located at residues 1-30; sequence GIPCGESCVFIPCITGAIGCSCKSKVCYRN. 3 disulfide bridges follow: cysteine 4-cysteine 20, cysteine 8-cysteine 22, and cysteine 13-cysteine 27. A propeptide spans 31 to 95 (removed in mature form); that stretch reads HVIAAEAKTM…KDHLKMSITN (65 aa).

Contains 3 disulfide bonds. Post-translationally, this is a cyclic peptide. As to expression, expressed in flower, stem, shoot, root, leaf, seed, pod and nodule (at protein level).

Its function is as follows. Probably participates in a plant defense mechanism. Active against Gram-negative bacteria E.coli ATCC 700926 (MIC=1.1 uM), K.pneumoniae ATTC 13883 (MIC=2.7 uM) and P.aeruginosa ATCC 39018 (MIC=4.7 uM). Has hemolytic and cytotoxic activity. This is Cliotide T1 from Clitoria ternatea (Butterfly pea).